Reading from the N-terminus, the 1325-residue chain is SCAN domain-containing protein 3 (1325 aa).

In terms of domain architecture, SCAN box spans 52–134; that stretch reads RQRFRQFCYQ…TLLEDLEREL (83 aa). Residues 246-275 are a coiled coil; that stretch reads KAKYCQLIKEVKEAKAKAKKESVDYRRLAR. The 161-residue stretch at 366 to 526 folds into the Integrase catalytic domain; sequence KSIKEVSSRC…TPCESAFSSE (161 aa). Positions 542-568 form a coiled coil; that stretch reads ASLHTENELDQADKELENTLRAQYEEN.

In terms of tissue distribution, weakly expressed in the lung (at protein level).

It localises to the nucleus. This chain is SCAN domain-containing protein 3, found in Homo sapiens (Human).